A 388-amino-acid chain; its full sequence is Tumor protein p53-inducible protein 13 (388 aa).

A signal peptide spans 1 to 27 (MVPPPPPPSRLLLVALVGLLSLHEVVA). The Extracellular segment spans residues 28–304 (EPAEEAGTRC…ARGPTPRTEE (277 aa)). A helical membrane pass occupies residues 305 to 325 (AAWAAMALTFLLVLLTLATLC). Topologically, residues 326-388 (TRLHRNFRRS…DSGPDSESSD (63 aa)) are cytoplasmic. Residues 361–372 (PSRRIKRSRRRP) are compositionally biased toward basic residues. The interval 361-388 (PSRRIKRSRRRPLLPPTPDSGPDSESSD) is disordered.

It localises to the cell membrane. Its subcellular location is the cytoplasm. May act as a tumor suppressor. Inhibits tumor cell growth, when overexpressed. This chain is Tumor protein p53-inducible protein 13 (Tp53i13), found in Rattus norvegicus (Rat).